The chain runs to 130 residues: Small ribosomal subunit protein uS11 (130 aa).

This sequence belongs to the universal ribosomal protein uS11 family. In terms of assembly, part of the 30S ribosomal subunit. Interacts with proteins S7 and S18. Binds to IF-3.

In terms of biological role, located on the platform of the 30S subunit, it bridges several disparate RNA helices of the 16S rRNA. Forms part of the Shine-Dalgarno cleft in the 70S ribosome. The protein is Small ribosomal subunit protein uS11 of Caldanaerobacter subterraneus subsp. tengcongensis (strain DSM 15242 / JCM 11007 / NBRC 100824 / MB4) (Thermoanaerobacter tengcongensis).